A 714-amino-acid polypeptide reads, in one-letter code: Fatty acid oxidation complex subunit alpha (714 aa).

Residues 1 to 190 (MEMASAFTLN…KLGLVDDVVP (190 aa)) form an enoyl-CoA hydratase region. The tract at residues 306 to 714 (APLNSVGILG…FWKTTATDLQ (409 aa)) is 3-hydroxyacyl-CoA dehydrogenase.

It in the N-terminal section; belongs to the enoyl-CoA hydratase/isomerase family. In the central section; belongs to the 3-hydroxyacyl-CoA dehydrogenase family. Heterotetramer of two alpha chains (FadJ) and two beta chains (FadI).

The protein resides in the cytoplasm. The enzyme catalyses a (3S)-3-hydroxyacyl-CoA = a (2E)-enoyl-CoA + H2O. It carries out the reaction a 4-saturated-(3S)-3-hydroxyacyl-CoA = a (3E)-enoyl-CoA + H2O. It catalyses the reaction a (3S)-3-hydroxyacyl-CoA + NAD(+) = a 3-oxoacyl-CoA + NADH + H(+). The catalysed reaction is (3S)-3-hydroxybutanoyl-CoA = (3R)-3-hydroxybutanoyl-CoA. It participates in lipid metabolism; fatty acid beta-oxidation. Its function is as follows. Catalyzes the formation of a hydroxyacyl-CoA by addition of water on enoyl-CoA. Also exhibits 3-hydroxyacyl-CoA epimerase and 3-hydroxyacyl-CoA dehydrogenase activities. The polypeptide is Fatty acid oxidation complex subunit alpha (Escherichia coli (strain ATCC 8739 / DSM 1576 / NBRC 3972 / NCIMB 8545 / WDCM 00012 / Crooks)).